Consider the following 50-residue polypeptide: Large ribosomal subunit protein bL33 (50 aa).

It belongs to the bacterial ribosomal protein bL33 family.

This is Large ribosomal subunit protein bL33 from Solibacter usitatus (strain Ellin6076).